Reading from the N-terminus, the 44-residue chain is Small ribosomal subunit protein eS31 (44 aa).

The Zn(2+) site is built by Cys18, Cys21, Cys35, and Cys38. The segment at 18–38 (CPRCGDTVLAEHEDRQHCGKC) adopts a C4-type zinc-finger fold.

It belongs to the eukaryotic ribosomal protein eS31 family. As to quaternary structure, part of the 30S ribosomal subunit. It depends on Zn(2+) as a cofactor.

This chain is Small ribosomal subunit protein eS31, found in Haloarcula marismortui (strain ATCC 43049 / DSM 3752 / JCM 8966 / VKM B-1809) (Halobacterium marismortui).